A 758-amino-acid chain; its full sequence is Spastin (758 aa).

The tract at residues 1–99 (MVRTKNQSSS…PTTCSPRSGH (99 aa)) is disordered. Residues 1–121 (MVRTKNQSSS…KQNLYVVSFP (121 aa)) lie on the Cytoplasmic side of the membrane. Residues 1–210 (MVRTKNQSSS…RPIQPLEMAA (210 aa)) are required for localization to punctate cytoplasmic foci. Low complexity-rich tracts occupy residues 8–28 (SSSSSASSSSTKSPIKSSSGA), 43–58 (RSSSASNVAAVVAGGS), 66–76 (SSNRRSPGSSP), and 85–95 (TDDLTPTTCSP). Residues 122 to 142 (IIFLFNVLRSLIYQLFCIFRY) constitute an intramembrane region (helical). Over 143–758 (LYGASTKVIY…WSQDYGDITI (616 aa)) the chain is Cytoplasmic. 2 stretches are compositionally biased toward polar residues: residues 169–180 (SKEQQQSLNHPS) and 189–198 (QEQQLSNQPQ). The interval 169–203 (SKEQQQSLNHPSELSREGDGQEQQLSNQPQRFRPI) is disordered. Residues 208–758 (MAANRPGGGY…WSQDYGDITI (551 aa)) form a sufficient for interaction with microtubules and microtubule severing region. The 76-residue stretch at 233-308 (HRRAFEYISK…SMARDRLHFL (76 aa)) folds into the MIT domain. Disordered regions lie at residues 353-375 (RVRSSGYGPKATTSAQPTASGRK) and 390-454 (NKSQ…ASTP). Polar residues-rich tracts occupy residues 390–406 (NKSQTLPRNLGSKTSVG) and 425–454 (QFSSGRNTPPQRSRTPINNNGPSGSGASTP). Residues 443 to 455 (NNGPSGSGASTPV) are required for interaction with microtubules. 523–530 (GPPGNGKT) is a binding site for ATP.

It belongs to the AAA ATPase family. Spastin subfamily. In terms of assembly, homohexamer. The homohexamer is stabilized by ATP-binding. The homohexamer may adopt a ring conformation through which microtubules pass prior to being severed. Interacts with microtubules. Interacts with atl; may be involved in microtubule dynamics.

It is found in the membrane. The protein localises to the cytoplasm. Its subcellular location is the cytoskeleton. The protein resides in the microtubule organizing center. It localises to the centrosome. It is found in the chromosome. The protein localises to the lipid droplet. The catalysed reaction is n ATP + n H2O + a microtubule = n ADP + n phosphate + (n+1) alpha/beta tubulin heterodimers.. In terms of biological role, ATP-dependent microtubule severing protein. Stimulates microtubule minus-end depolymerization and poleward microtubule flux in the mitotic spindle. Regulates microtubule stability in the neuromuscular junction synapse. Involved in lipid metabolism by regulating the size and distribution of lipid droplets. Involved in axon regeneration by regulating microtubule severing. The polypeptide is Spastin (Drosophila erecta (Fruit fly)).